A 191-amino-acid chain; its full sequence is uncharacterized protein (191 aa).

The HTH tetR-type domain occupies 6 to 66; sequence GLTQKMIVDA…ELAVRGLTKL (61 aa). Positions 29 to 48 form a DNA-binding region, H-T-H motif; it reads SLAALSKKMNVRPPSLYNHI.

This is an uncharacterized protein from Bacillus subtilis (strain 168).